The sequence spans 95 residues: UPF0213 protein ESA_03545 (95 aa).

In terms of domain architecture, GIY-YIG spans 2–77; sequence EEWFLYLIRC…KQLTKRQKEQ (76 aa).

It belongs to the UPF0213 family.

The sequence is that of UPF0213 protein ESA_03545 from Cronobacter sakazakii (strain ATCC BAA-894) (Enterobacter sakazakii).